The following is a 451-amino-acid chain: Glucose-6-phosphate isomerase (451 aa).

Catalysis depends on Glu291, which acts as the Proton donor. Catalysis depends on residues His312 and Lys426.

Belongs to the GPI family.

It is found in the cytoplasm. The enzyme catalyses alpha-D-glucose 6-phosphate = beta-D-fructose 6-phosphate. Its pathway is carbohydrate biosynthesis; gluconeogenesis. The protein operates within carbohydrate degradation; glycolysis; D-glyceraldehyde 3-phosphate and glycerone phosphate from D-glucose: step 2/4. Catalyzes the reversible isomerization of glucose-6-phosphate to fructose-6-phosphate. This is Glucose-6-phosphate isomerase from Caldanaerobacter subterraneus subsp. tengcongensis (strain DSM 15242 / JCM 11007 / NBRC 100824 / MB4) (Thermoanaerobacter tengcongensis).